The following is a 194-amino-acid chain: 4'-phosphooxetanocin A phosphatase (194 aa).

Residues Arg-16 and Trp-17 each coordinate 4'-phosphooxetanocin A. Trp-17 lines the oxetanocin A pocket. Mg(2+)-binding residues include His-31, His-66, and Asp-67. Residues His-75, Ser-78, and Lys-81 each coordinate 4'-phosphooxetanocin A. The oxetanocin A site is built by His-75 and Ser-78. Residue Asp-132 coordinates Mg(2+).

This sequence belongs to the 5DNU family. Homodimer. The cofactor is Mg(2+). Co(2+) is required as a cofactor. It depends on Mn(2+) as a cofactor.

The catalysed reaction is 4'-phosphooxetanocin A + H2O = oxetanocin A + phosphate. Its function is as follows. Phosphohydrolase involved in the biosynthesis of oxetanocin A (OXT-A), a nucleoside analog with antitumor, antiviral and antibacterial properties. Catalyzes the hydrolysis of phosphooxetanocin A (OXT-A-P) to generate oxetanocin A (OXT-A) and a molecule of inorganic phosphate. Can also bind and hydrolyze OXT triphosphate (OXT-A-PPP) and OXT diphosphate (OXT-A-PP), and thus catalyze the sequential hydrolysis of tri-, di- and mono-phosphorylated oxetanocin A compounds, releasing one molecule of inorganic phosphate at a time. In vitro can also use dATP, dAMP and dADP. This is 4'-phosphooxetanocin A phosphatase from Priestia megaterium (Bacillus megaterium).